A 365-amino-acid chain; its full sequence is Chorismate synthase (365 aa).

NADP(+)-binding residues include Arg-48 and Arg-54. FMN is bound by residues 131–133 (RSS), 243–244 (NA), Gly-288, 303–307 (KPTSS), and Arg-329.

Belongs to the chorismate synthase family. Homotetramer. FMNH2 is required as a cofactor.

It carries out the reaction 5-O-(1-carboxyvinyl)-3-phosphoshikimate = chorismate + phosphate. It participates in metabolic intermediate biosynthesis; chorismate biosynthesis; chorismate from D-erythrose 4-phosphate and phosphoenolpyruvate: step 7/7. Functionally, catalyzes the anti-1,4-elimination of the C-3 phosphate and the C-6 proR hydrogen from 5-enolpyruvylshikimate-3-phosphate (EPSP) to yield chorismate, which is the branch point compound that serves as the starting substrate for the three terminal pathways of aromatic amino acid biosynthesis. This reaction introduces a second double bond into the aromatic ring system. The chain is Chorismate synthase from Sinorhizobium medicae (strain WSM419) (Ensifer medicae).